The primary structure comprises 93 residues: MTIIASISKIGNIKSSSSSSIGSGKSSAVSFGNSRIACGECGGSATGLLGNIANSGTGMVSQIPVTVMLDVNANANLNPSMSAVPAGNSCGCN.

This sequence belongs to the hssA/B family.

This Dictyostelium discoideum (Social amoeba) protein is HssA/B-like protein 26 (hssl26).